Here is a 181-residue protein sequence, read N- to C-terminus: Transcription termination/antitermination protein NusG (181 aa).

The 32-residue stretch at 130-161 (PGEMVRVNDGPFADFNGVVEEVDYEKSRLKVS) folds into the KOW domain.

The protein belongs to the NusG family. In terms of assembly, monomer. Interacts with the transcription termination factor Rho and with RNA polymerase.

Its function is as follows. Participates in transcription elongation, termination and antitermination. In the absence of Rho, increases the rate of transcription elongation by the RNA polymerase (RNAP), probably by partially suppressing pausing. In the presence of Rho, modulates most Rho-dependent termination events by interacting with the RNAP to render the complex more susceptible to the termination activity of Rho. May be required to overcome a kinetic limitation of Rho to function at certain terminators. Also involved in ribosomal RNA transcriptional antitermination. This chain is Transcription termination/antitermination protein NusG, found in Shigella flexneri.